Here is a 332-residue protein sequence, read N- to C-terminus: Fructose-1,6-bisphosphatase class 1 (332 aa).

Mg(2+) is bound by residues Glu89, Asp110, Leu112, and Asp113. Residues 113 to 116, Asn206, Tyr239, 257 to 259, and Lys269 each bind substrate; these read DGSS and YLY. Glu275 contacts Mg(2+).

Belongs to the FBPase class 1 family. In terms of assembly, homotetramer. The cofactor is Mg(2+).

The protein resides in the cytoplasm. The catalysed reaction is beta-D-fructose 1,6-bisphosphate + H2O = beta-D-fructose 6-phosphate + phosphate. The protein operates within carbohydrate biosynthesis; gluconeogenesis. In Escherichia coli O157:H7, this protein is Fructose-1,6-bisphosphatase class 1.